A 312-amino-acid polypeptide reads, in one-letter code: Olfactory receptor 2J1 (312 aa).

Residues 1–26 lie on the Extracellular side of the membrane; that stretch reads MLMKKNASFEDFFLLLGFSNWPHLEV. Asparagine 6 carries an N-linked (GlcNAc...) asparagine glycan. Residues 27–50 form a helical membrane-spanning segment; sequence VLFVVILIFYLITLIGNLFIIILS. The Cytoplasmic segment spans residues 51 to 58; it reads YLDSHLHT. A helical membrane pass occupies residues 59-80; the sequence is PMYFFLSNLSFLDLCYTTSSIP. The Extracellular segment spans residues 81-101; that stretch reads QLLVNLWGPEKTISYAGCTVQ. An intrachain disulfide couples cysteine 98 to cysteine 190. A helical transmembrane segment spans residues 102–121; sequence LYFVLALGTAECVLLVVMSY. The Cytoplasmic segment spans residues 122–140; the sequence is DRYAAVCRPLHYTVLMHPR. A helical transmembrane segment spans residues 141–159; it reads FCRLLAAASWVSGFTTSAL. Residues 160–196 are Extracellular-facing; sequence HSSFTFWIPLCRHRLVDHFFCEVPALLRLSCVDTQAN. The helical transmembrane segment at 197–220 threads the bilayer; the sequence is ELTLMVMSSIFVLIPLILILTSYG. Over 221-237 the chain is Cytoplasmic; that stretch reads AIARAVLSMQSTTGLQK. A helical membrane pass occupies residues 238–260; sequence VLRTCGAHLMVVSLFFIPVMCMY. At 261-273 the chain is on the extracellular side; that stretch reads LQPPSENSQDQGK. The chain crosses the membrane as a helical span at residues 274–293; sequence FIALFYTVVTPSLNPLIYTF. Over 294-312 the chain is Cytoplasmic; it reads RNKDVRGAVKRLMGWEWGM.

It belongs to the G-protein coupled receptor 1 family.

Its subcellular location is the cell membrane. Functionally, odorant receptor. The sequence is that of Olfactory receptor 2J1 (OR2J1) from Homo sapiens (Human).